Reading from the N-terminus, the 191-residue chain is Probable DNA-directed RNA polymerase subunit delta (191 aa).

An HTH HARE-type domain is found at 14 to 83 (LSMIEVARAI…GENKWGLRSW (70 aa)). The tract at residues 118 to 191 (DEDAIDYRDD…EDEEDEEPVL (74 aa)) is disordered.

It belongs to the RpoE family. RNAP is composed of a core of 2 alpha, a beta and a beta' subunits. The core is associated with a delta subunit and one of several sigma factors.

Participates in both the initiation and recycling phases of transcription. In the presence of the delta subunit, RNAP displays an increased specificity of transcription, a decreased affinity for nucleic acids, and an increased efficiency of RNA synthesis because of enhanced recycling. The protein is Probable DNA-directed RNA polymerase subunit delta of Streptococcus pyogenes serotype M18 (strain MGAS8232).